The sequence spans 1365 residues: Histone-lysine N-methyltransferase NSD2 (1365 aa).

A phosphothreonine mark is found at Thr110 and Thr114. Ser121 bears the Phosphoserine mark. Residues 149–169 form a disordered region; that stretch reads ADVSQSEENEQKSDNKTRRNR. Ser172 carries the phosphoserine modification. Positions 222-286 constitute a PWWP 1 domain; the sequence is VGDLVWSKVS…FEKSLVAFEG (65 aa). Disordered stretches follow at residues 373 to 455, 513 to 567, and 594 to 658; these read MVDS…RKGD, QSEE…DKTA, and CKPL…SKKS. At Ser376 the chain carries Phosphoserine. Position 422 is a phosphothreonine (Thr422). The HMG box DNA-binding region spans 453–521; that stretch reads KGDSAAQFLV…AQSEEDSGNG (69 aa). Residues 552–567 are compositionally biased toward basic and acidic residues; it reads DKHSLRKRETITDKTA. The segment covering 603-623 has biased composition (polar residues); that stretch reads ASATASSALGFNKSSSPSASL. Residues 632–648 show a composition bias toward acidic residues; the sequence is PGDEPSESPYESADETQ. 3 consecutive PHD-type zinc fingers follow at residues 667–713, 714–770, and 831–875; these read EYVC…CASG, IHSC…CHAS, and VSWC…CRAG. Positions 880 to 942 constitute a PWWP 2 domain; the sequence is FQDIIWVKLG…QARVFPYMEG (63 aa). One can recognise an AWS domain in the interval 1011–1061; that stretch reads SEIPKCNCKPTDENPCGSDSECLNRMLMFECHPQVCPAGEYCQNQCFTKRQ. Positions 1016, 1018, 1026, 1032, 1041, 1046, and 1052 each coordinate Zn(2+). In terms of domain architecture, SET spans 1063–1180; sequence PETKIIKTDG…AGTELTFNYN (118 aa). S-adenosyl-L-methionine-binding positions include Trp1075, 1115-1118, and 1141-1142; these read THFY and NH. A Zn(2+)-binding site is contributed by Cys1144. Residue Asn1186 participates in S-adenosyl-L-methionine binding. The Post-SET domain occupies 1187–1203; it reads EKTVCRCGASNCSGFLG. Cys1191 contributes to the Zn(2+) binding site. S-adenosyl-L-methionine is bound at residue Arg1192. Cys1193 and Cys1198 together coordinate Zn(2+). The segment at 1206–1232 is disordered; sequence PKTSASLSSEEKGKKAKKKTRRRRAKG. Basic residues predominate over residues 1219–1230; sequence KKAKKKTRRRRA. Residues 1239–1286 form a PHD-type 4; atypical zinc finger; sequence EDECFRCGDGGQLVLCDRKFCTKAYHLSCLGLGKRPFGKWECPWHHCD. The segment at 1329–1365 is disordered; sequence RADSSSSTKTEKPFPESLKSKGKRKKRRCWRRVTDGK. Positions 1348–1359 are enriched in basic residues; it reads SKGKRKKRRCWR.

This sequence belongs to the class V-like SAM-binding methyltransferase superfamily. Histone-lysine methyltransferase family. SET2 subfamily. As to quaternary structure, interacts with HDAC1. Interacts (via PHD-type zinc fingers 1, 2 and 3) with SALL1. Interacts (via PHD-type 1, 2 and 3) with SALL4. Interacts with NANOG. Interacts with OGT. Interacts (via HMG box) with NKX2-5. In terms of tissue distribution, during B-cell development, expressed in early B2 cell progenitors (pre- and pro-B cells) with a decrease in expression at later stages.

The protein localises to the nucleus. It is found in the chromosome. The catalysed reaction is L-lysyl(36)-[histone H3] + S-adenosyl-L-methionine = N(6)-methyl-L-lysyl(36)-[histone H3] + S-adenosyl-L-homocysteine + H(+). It carries out the reaction L-lysyl(36)-[histone H3] + 2 S-adenosyl-L-methionine = N(6),N(6)-dimethyl-L-lysyl(36)-[histone H3] + 2 S-adenosyl-L-homocysteine + 2 H(+). Functionally, histone methyltransferase which specifically dimethylates nucleosomal histone H3 at 'Lys-36' (H3K36me2). Also monomethylates nucleosomal histone H3 at 'Lys-36' (H3K36me) in vitro. Does not trimethylate nucleosomal histone H3 at 'Lys-36' (H3K36me3). However, specifically trimethylates histone H3 at 'Lys-36' (H3K36me3) at euchromatic regions in embryonic stem (ES) cells. By methylating histone H3 at 'Lys-36', involved in the regulation of gene transcription during various biological processes. In ES cells, associates with developmental transcription factors such as SALL1 and represses inappropriate gene transcription mediated by histone deacetylation. During heart development, associates with transcription factor NKX2-5 to repress transcription of NKX2-5 target genes. Plays an essential role in adipogenesis, by regulating expression of genes involved in pre-adipocyte differentiation. During T-cell receptor (TCR) and CD28-mediated T-cell activation, promotes the transcription of transcription factor BCL6 which is required for follicular helper T (Tfh) cell differentiation. During B-cell development, required for the generation of the B1 lineage. During B2 cell activation, may contribute to the control of isotype class switch recombination (CRS), splenic germinal center formation, and the humoral immune response. Plays a role in class switch recombination of the immunoglobulin heavy chain (IgH) locus during B-cell activation. By regulating the methylation of histone H3 at 'Lys-36' and histone H4 at 'Lys-20' at the IgH locus, involved in TP53BP1 recruitment to the IgH switch region and promotes the transcription of IgA. Its function is as follows. Histone methyltransferase which specifically dimethylates nucleosomal histone H3 at 'Lys-36' (H3K36me2). Mono-, di- and tri-methylates histone H3 at 'Lys-27' (H3K27me, H3K27me2, H3K27me3). Methylation of histone H3 at 'Lys-27' is controversial. May act as a transcription regulator that binds DNA and suppresses IL5 transcription through HDAC recruitment. The polypeptide is Histone-lysine N-methyltransferase NSD2 (Nsd2) (Mus musculus (Mouse)).